The sequence spans 333 residues: MATLQEKLITPIVAGSTTPNNKITVVGVGQVGMACAISILGKGLCDELALVDVLEDKLKGEMMDLQHGSLFLQTHKIVADKDLRVTANSKIVVVTAGVRQQEGESRLNLVQRNVNVFKFIIPQIMKYSPNCTILVVSNPVDILTYVTWKLSGLPKHRVIGSGCNLDSARFRHLMAEKLGIHPTSCHGWILGEHGDSSVAVWSGVNVAGVSLQELNPAMGTDKDSENWKEVHKMVVDSAYEVIKLKGYTNWAIGLSVADLIESYVKNLCRVHPVSTMVKGMYGIENEVFLSLPCVLSASGLTSVINQKLKDEEVAQLRKSADTLWSIQKDLKDL.

Residues 29 to 57 (GQVG…LEDK) and arginine 99 contribute to the NAD(+) site. 3 residues coordinate substrate: arginine 106, asparagine 138, and arginine 169. NAD(+) is bound at residue asparagine 138. The active-site Proton acceptor is histidine 193. Threonine 248 contributes to the substrate binding site.

This sequence belongs to the LDH/MDH superfamily. LDH family. In terms of assembly, homotetramer.

It is found in the cytoplasm. The enzyme catalyses (S)-lactate + NAD(+) = pyruvate + NADH + H(+). It functions in the pathway fermentation; pyruvate fermentation to lactate; (S)-lactate from pyruvate: step 1/1. Functionally, interconverts simultaneously and stereospecifically pyruvate and lactate with concomitant interconversion of NADH and NAD(+). This chain is L-lactate dehydrogenase B chain (LDHB), found in Pelodiscus sinensis japonicus (Chinese soft-shelled turtle).